Here is a 788-residue protein sequence, read N- to C-terminus: Spastin (788 aa).

Residues 1–105 (MVRTKNQSSS…PRSAGGPSSV (105 aa)) form a disordered region. Over 1 to 116 (MVRTKNQSSS…KQNLYVVSFP (116 aa)) the chain is Cytoplasmic. The required for localization to punctate cytoplasmic foci stretch occupies residues 1-227 (MVRTKNQSSS…NRSGSGYSPG (227 aa)). 2 stretches are compositionally biased toward low complexity: residues 8–48 (SSSS…SSHR) and 57–75 (ATNVSSSSNRRTTPGSSPD). The segment at residues 117–137 (IIFLFNVLRSLIYQLFCIFRY) is an intramembrane region (helical). At 138-788 (LYGASTKVIY…WSSDYGDITI (651 aa)) the chain is on the cytoplasmic side. The sufficient for interaction with microtubules and microtubule severing stretch occupies residues 227–788 (GPGDPLLAKQ…WSSDYGDITI (562 aa)). Residues 240 to 315 (HRRAFEYISK…SMARDRLHFL (76 aa)) form the MIT domain. Residues 330–353 (KEEQKPNPSREQHQKPQKAREAAD) show a composition bias toward basic and acidic residues. The disordered stretch occupies residues 330–484 (KEEQKPNPSR…SGSGSGASTP (155 aa)). Residues 380–400 (LTTPRISATATTPTSSSSLAS) show a composition bias toward low complexity. Composition is skewed to polar residues over residues 419–433 (NKSQTLPRNLGSKTS) and 453–469 (QFSSGRNTPPQRSRTPI). The segment at 471 to 485 (NNGASGSGSGASTPV) is required for interaction with microtubules. 553–560 (GPPGNGKT) serves as a coordination point for ATP.

This sequence belongs to the AAA ATPase family. Spastin subfamily. Homohexamer. The homohexamer is stabilized by ATP-binding. The homohexamer may adopt a ring conformation through which microtubules pass prior to being severed. Interacts with microtubules. Interacts with atl; may be involved in microtubule dynamics.

The protein localises to the membrane. The protein resides in the cytoplasm. Its subcellular location is the cytoskeleton. It is found in the microtubule organizing center. It localises to the centrosome. The protein localises to the chromosome. The protein resides in the lipid droplet. The enzyme catalyses n ATP + n H2O + a microtubule = n ADP + n phosphate + (n+1) alpha/beta tubulin heterodimers.. In terms of biological role, ATP-dependent microtubule severing protein. Stimulates microtubule minus-end depolymerization and poleward microtubule flux in the mitotic spindle. Regulates microtubule stability in the neuromuscular junction synapse. Involved in lipid metabolism by regulating the size and distribution of lipid droplets. Involved in axon regeneration by regulating microtubule severing. In Drosophila pseudoobscura pseudoobscura (Fruit fly), this protein is Spastin.